Here is a 75-residue protein sequence, read N- to C-terminus: Putative antitoxin VapB12 (75 aa).

Functionally, putative antitoxin component of a possible type II toxin-antitoxin (TA) system. The cognate toxin is VapC12. In Mycobacterium tuberculosis (strain CDC 1551 / Oshkosh), this protein is Putative antitoxin VapB12 (vapB12).